Consider the following 211-residue polypeptide: Ribosomal RNA small subunit methyltransferase G (211 aa).

S-adenosyl-L-methionine-binding positions include Gly-81, Leu-86, 132 to 133, and Arg-147; that span reads AE.

It belongs to the methyltransferase superfamily. RNA methyltransferase RsmG family.

The protein localises to the cytoplasm. The catalysed reaction is guanosine(527) in 16S rRNA + S-adenosyl-L-methionine = N(7)-methylguanosine(527) in 16S rRNA + S-adenosyl-L-homocysteine. Its function is as follows. Specifically methylates the N7 position of guanine in position 527 of 16S rRNA. This chain is Ribosomal RNA small subunit methyltransferase G, found in Dichelobacter nodosus (strain VCS1703A).